A 1942-amino-acid polypeptide reads, in one-letter code: GREB1-like protein (1942 aa).

4 disordered regions span residues 76–101 (SSNS…YLQG), 235–306 (PFSN…GTKT), 325–373 (MDGR…HRSW), and 1123–1256 (TKTA…RTQV). Acidic residues predominate over residues 81 to 90 (EDMDDEDDSD). Over residues 237–253 (SNSASSSKPSSSSSLSS) the composition is skewed to low complexity. Positions 338–362 (NPLSTPSHGYRTTETGDSPASTAMS) are enriched in polar residues. Residues 1127–1155 (TSREERPREGERSSGETAEHDDLPMELER) are compositionally biased toward basic and acidic residues. Positions 1158-1171 (SNASAATRTSGSTT) are enriched in low complexity. Residues 1172–1202 (ENGVSSSSILDKPSSQSDPCGSRTMMDSCSS) are compositionally biased toward polar residues. Positions 1212-1248 (SQAPSSSSTSSFSSASSSSSSSSSPAAQRPSQSTQAP) are enriched in low complexity. A helical transmembrane segment spans residues 1861–1881 (GVIFSGLLLYLCDSFVVSSLL).

The protein belongs to the GREB1 family.

It is found in the membrane. Plays a major role in early metanephros development. The sequence is that of GREB1-like protein (greb1l) from Danio rerio (Zebrafish).